The sequence spans 390 residues: Olfactomedin-like protein 3A (390 aa).

The first 17 residues, 1 to 17 (MRALQLLVLVLSGLVGA), serve as a signal peptide directing secretion. Residues 18–91 (QQQALMDYLE…RVDRVEREMD (74 aa)) are a coiled coil. Residues 130–386 (DCSDMISSIK…QILYKLQLKK (257 aa)) enclose the Olfactomedin-like domain. C131 and C313 are disulfide-bonded. N169 carries N-linked (GlcNAc...) asparagine glycosylation.

The protein belongs to the OLFML3 family.

The protein localises to the secreted. Functionally, secreted scaffold protein that plays an essential role in dorsoventral patterning during early development. Stabilizes axial formation by restricting chordin (CHRD) activity on the dorsal side. Acts by facilitating the association between the tolloid proteases and their substrate chordin (CHRD), leading to enhance chordin (CHRD) degradation. The protein is Olfactomedin-like protein 3A (olfml3a) of Danio rerio (Zebrafish).